The chain runs to 563 residues: Putative cysteine ligase BshC (563 aa).

Residues 474 to 506 (LEQSLMGTSKQAEKALDTLRQKTQRANRRKHDE) are a coiled coil.

Belongs to the BshC family.

The sequence is that of Putative cysteine ligase BshC from Prosthecochloris aestuarii (strain DSM 271 / SK 413).